The primary structure comprises 473 residues: Photosystem II CP43 reaction center protein (473 aa).

The propeptide occupies 1-14 (MKTLYSRRRFYHVE). Position 15 is an N-acetylthreonine (T15). T15 bears the Phosphothreonine mark. Helical transmembrane passes span 69 to 93 (LFEV…PHLA), 134 to 155 (LLGP…KDRN), 178 to 200 (KALY…RKIT), 255 to 275 (KPFA…LSYS), and 291 to 312 (WFNN…ASQA). A [CaMn4O5] cluster-binding site is contributed by E367. A helical transmembrane segment spans residues 447 to 471 (RARAAAAGFEKGIDRDFEPVLSMTP).

Belongs to the PsbB/PsbC family. PsbC subfamily. In terms of assembly, PSII is composed of 1 copy each of membrane proteins PsbA, PsbB, PsbC, PsbD, PsbE, PsbF, PsbH, PsbI, PsbJ, PsbK, PsbL, PsbM, PsbT, PsbX, PsbY, PsbZ, Psb30/Ycf12, at least 3 peripheral proteins of the oxygen-evolving complex and a large number of cofactors. It forms dimeric complexes. Requires Binds multiple chlorophylls and provides some of the ligands for the Ca-4Mn-5O cluster of the oxygen-evolving complex. It may also provide a ligand for a Cl- that is required for oxygen evolution. PSII binds additional chlorophylls, carotenoids and specific lipids. as cofactor.

The protein localises to the plastid. It localises to the chloroplast thylakoid membrane. One of the components of the core complex of photosystem II (PSII). It binds chlorophyll and helps catalyze the primary light-induced photochemical processes of PSII. PSII is a light-driven water:plastoquinone oxidoreductase, using light energy to abstract electrons from H(2)O, generating O(2) and a proton gradient subsequently used for ATP formation. The protein is Photosystem II CP43 reaction center protein of Solanum bulbocastanum (Wild potato).